The sequence spans 679 residues: UvrABC system protein B (679 aa).

The region spanning 25 to 412 (QGVNSGEEFQ…EGKFIEQVIR (388 aa)) is the Helicase ATP-binding domain. Residue 38–45 (GATGTGKT) coordinates ATP. The short motif at 91-114 (YYDYYQPEAYVPVSDTYIAKTASI) is the Beta-hairpin element. Positions 429-583 (QIDDLLSEIR…KKYNQINGIT (155 aa)) constitute a Helicase C-terminal domain. Residues 639–674 (PSLIDKLENKMKDAAKELNFEEAANLRDRIKKLRQK) enclose the UVR domain.

The protein belongs to the UvrB family. As to quaternary structure, forms a heterotetramer with UvrA during the search for lesions. Interacts with UvrC in an incision complex.

The protein resides in the cytoplasm. The UvrABC repair system catalyzes the recognition and processing of DNA lesions. A damage recognition complex composed of 2 UvrA and 2 UvrB subunits scans DNA for abnormalities. Upon binding of the UvrA(2)B(2) complex to a putative damaged site, the DNA wraps around one UvrB monomer. DNA wrap is dependent on ATP binding by UvrB and probably causes local melting of the DNA helix, facilitating insertion of UvrB beta-hairpin between the DNA strands. Then UvrB probes one DNA strand for the presence of a lesion. If a lesion is found the UvrA subunits dissociate and the UvrB-DNA preincision complex is formed. This complex is subsequently bound by UvrC and the second UvrB is released. If no lesion is found, the DNA wraps around the other UvrB subunit that will check the other stand for damage. The chain is UvrABC system protein B from Prochlorococcus marinus subsp. pastoris (strain CCMP1986 / NIES-2087 / MED4).